Here is a 526-residue protein sequence, read N- to C-terminus: uncharacterized protein (526 aa).

2 WD repeats span residues 210–248 and 452–491; these read SMEQYINSIAISPNKKYIALATTCGLIIYNLIDKTHHDT and SHNSCVTSIAISSNNKMILTAGLDGLLKLWNSKTLNLIDS.

This is an uncharacterized protein from Acanthamoeba polyphaga mimivirus (APMV).